A 375-amino-acid chain; its full sequence is Beta sliding clamp (375 aa).

This sequence belongs to the beta sliding clamp family. In terms of assembly, forms a ring-shaped head-to-tail homodimer around DNA which binds and tethers DNA polymerases and other proteins to the DNA. The DNA replisome complex has a single clamp-loading complex (3 tau and 1 each of delta, delta', psi and chi subunits) which binds 3 Pol III cores (1 core on the leading strand and 2 on the lagging strand) each with a beta sliding clamp dimer. Additional proteins in the replisome are other copies of gamma, psi and chi, Ssb, DNA helicase and RNA primase.

It is found in the cytoplasm. Confers DNA tethering and processivity to DNA polymerases and other proteins. Acts as a clamp, forming a ring around DNA (a reaction catalyzed by the clamp-loading complex) which diffuses in an ATP-independent manner freely and bidirectionally along dsDNA. Initially characterized for its ability to contact the catalytic subunit of DNA polymerase III (Pol III), a complex, multichain enzyme responsible for most of the replicative synthesis in bacteria; Pol III exhibits 3'-5' exonuclease proofreading activity. The beta chain is required for initiation of replication as well as for processivity of DNA replication. The polypeptide is Beta sliding clamp (dnaN) (Synechococcus elongatus (strain ATCC 33912 / PCC 7942 / FACHB-805) (Anacystis nidulans R2)).